The chain runs to 238 residues: Phosphoribosylaminoimidazole-succinocarboxamide synthase (238 aa).

The protein belongs to the SAICAR synthetase family.

The catalysed reaction is 5-amino-1-(5-phospho-D-ribosyl)imidazole-4-carboxylate + L-aspartate + ATP = (2S)-2-[5-amino-1-(5-phospho-beta-D-ribosyl)imidazole-4-carboxamido]succinate + ADP + phosphate + 2 H(+). It functions in the pathway purine metabolism; IMP biosynthesis via de novo pathway; 5-amino-1-(5-phospho-D-ribosyl)imidazole-4-carboxamide from 5-amino-1-(5-phospho-D-ribosyl)imidazole-4-carboxylate: step 1/2. This chain is Phosphoribosylaminoimidazole-succinocarboxamide synthase, found in Methanococcoides burtonii (strain DSM 6242 / NBRC 107633 / OCM 468 / ACE-M).